The following is a 136-amino-acid chain: IQNPEPAVYQLKDPRSQDSTLCLFTDFDSQINVPKTMESGTFITDKTVLDMKAMDSKSNGAIAWSNQTSFTCQDIFKETNATYPSSDVPCDATLTEKSFETDMNLNFQNLSVMGLRILLLKVAGFNLLMTLRLWSS.

In terms of domain architecture, Ig-like C1-type spans 19-103 (STLCLFTDFD…LTEKSFETDM (85 aa)). A disulfide bridge links C22 with C72. N-linked (GlcNAc...) asparagine glycans are attached at residues N66, N80, and N109. The segment at 90–111 (CDATLTEKSFETDMNLNFQNLS) is connecting peptide. A helical transmembrane segment spans residues 111-131 (SVMGLRILLLKVAGFNLLMTL). Residues 132–136 (RLWSS) lie on the Cytoplasmic side of the membrane.

Alpha-beta TR is a heterodimer composed of an alpha and beta chain; disulfide-linked. The alpha-beta TR is associated with the transmembrane signaling CD3 coreceptor proteins to form the TR-CD3 (TcR or TCR). The assembly of alpha-beta TR heterodimers with CD3 occurs in the endoplasmic reticulum where a single alpha-beta TR heterodimer associates with one CD3D-CD3E heterodimer, one CD3G-CD3E heterodimer and one CD247 homodimer forming a stable octameric structure. CD3D-CD3E and CD3G-CD3E heterodimers preferentially associate with TR alpha and TR beta chains, respectively. The association of the CD247 homodimer is the last step of TcR assembly in the endoplasmic reticulum and is required for transport to the cell surface.

It localises to the cell membrane. Functionally, constant region of T cell receptor (TR) alpha chain. Alpha-beta T cell receptors are antigen specific receptors which are essential to the immune response and are present on the cell surface of T lymphocytes. Recognize peptide-major histocompatibility (MH) (pMH) complexes that are displayed by antigen presenting cells (APC), a prerequisite for efficient T cell adaptive immunity against pathogens. Binding of alpha-beta TR to pMH complex initiates TR-CD3 clustering on the cell surface and intracellular activation of LCK that phosphorylates the ITAM motifs of CD3G, CD3D, CD3E and CD247 enabling the recruitment of ZAP70. In turn, ZAP70 phosphorylates LAT, which recruits numerous signaling molecules to form the LAT signalosome. The LAT signalosome propagates signal branching to three major signaling pathways, the calcium, the mitogen-activated protein kinase (MAPK) kinase and the nuclear factor NF-kappa-B (NF-kB) pathways, leading to the mobilization of transcription factors that are critical for gene expression and essential for T cell growth and differentiation. The T cell repertoire is generated in the thymus, by V-(D)-J rearrangement. This repertoire is then shaped by intrathymic selection events to generate a peripheral T cell pool of self-MH restricted, non-autoaggressive T cells. Post-thymic interaction of alpha-beta TR with the pMH complexes shapes TR structural and functional avidity. The protein is T-cell receptor alpha chain constant of Mus musculus (Mouse).